The following is a 147-amino-acid chain: Globin (147 aa).

The Globin domain occupies 2 to 147 (SFSAAQVDTV…SVANGIGQYQ (146 aa)). Histidine 64 and histidine 95 together coordinate heme b.

Belongs to the globin family. Homodimer or homooligomer.

This Aequiyoldia eightsii (Antarctic yoldia) protein is Globin.